We begin with the raw amino-acid sequence, 296 residues long: Polyamine aminopropyltransferase (296 aa).

In terms of domain architecture, PABS spans 5-238 (ELWYETLHAN…GIMTFAWATQ (234 aa)). Gln-33 serves as a coordination point for S-methyl-5'-thioadenosine. Residues His-64 and Asp-88 each contribute to the spermidine site. Residues Glu-108 and 140 to 141 (DG) contribute to the S-methyl-5'-thioadenosine site. Asp-158 functions as the Proton acceptor in the catalytic mechanism. Residue 158–161 (DCTD) coordinates spermidine. Pro-165 serves as a coordination point for S-methyl-5'-thioadenosine.

Belongs to the spermidine/spermine synthase family. Homodimer or homotetramer.

Its subcellular location is the cytoplasm. It catalyses the reaction S-adenosyl 3-(methylsulfanyl)propylamine + putrescine = S-methyl-5'-thioadenosine + spermidine + H(+). It functions in the pathway amine and polyamine biosynthesis; spermidine biosynthesis; spermidine from putrescine: step 1/1. Catalyzes the irreversible transfer of a propylamine group from the amino donor S-adenosylmethioninamine (decarboxy-AdoMet) to putrescine (1,4-diaminobutane) to yield spermidine. The sequence is that of Polyamine aminopropyltransferase from Yersinia pestis bv. Antiqua (strain Antiqua).